Consider the following 94-residue polypeptide: MLKPLGDRIVIELIQTEEKTASGIVLPDTAKEKPQEGKVVAVGSGRVLDNGERVAPEVSVGDRIIFSKYAGTEVKYDGKEYLILRESDILAVIG.

It belongs to the GroES chaperonin family. In terms of assembly, heptamer of 7 subunits arranged in a ring. Interacts with the chaperonin GroEL.

The protein resides in the cytoplasm. Functionally, together with the chaperonin GroEL, plays an essential role in assisting protein folding. The GroEL-GroES system forms a nano-cage that allows encapsulation of the non-native substrate proteins and provides a physical environment optimized to promote and accelerate protein folding. GroES binds to the apical surface of the GroEL ring, thereby capping the opening of the GroEL channel. The polypeptide is Co-chaperonin GroES (Anoxybacillus flavithermus (strain DSM 21510 / WK1)).